Consider the following 218-residue polypeptide: Sodium channel regulatory subunit beta-1 (218 aa).

The signal sequence occupies residues 1 to 18 (MGRLLALVVGAALVSSAC). Over 19-157 (GGCVEVDSET…DKANRDMASI (139 aa)) the chain is Extracellular. Disulfide bonds link C21–C43 and C40–C121. Positions 22 to 150 (VEVDSETEAV…KIHIEVVDKA (129 aa)) constitute an Ig-like C2-type domain. Residues N93, N110, N114, and N135 are each glycosylated (N-linked (GlcNAc...) asparagine). A helical membrane pass occupies residues 158–179 (VSEIMMYVLIVVLTIWLVAEMI). The Cytoplasmic segment spans residues 180 to 218 (YCYKKIAAATETAAQENASEYLAITSESKENCTGVQVAE).

The protein belongs to the sodium channel auxiliary subunit SCN1B (TC 8.A.17) family. Voltage-gated sodium (Nav) channel consists of an ion-conducting pore-forming alpha subunit functional on its own that is regulated by one or more beta subunits. Interacts with SCN1A; regulatory subunit of SCN1A/Nav1.1. Interacts with SCN3A; regulatory subunit of SCN3A/Nav1.3. Interacts with SCN4A; regulatory subunit of SCN4A/Nav1.4. Interacts with SCN5A; regulatory subunit of SCN5A/Nav1.5. Interacts with SCN8A; regulatory subunit of SCN8A/Nav1.6. Interacts with SCN9A; regulatory subunit of SCN9A/Nav1.7. Interacts with SCN10A; regulatory subunit of SCN10A/Nav1.8. Interacts with NFASC. Interacts with TMEM65. As to expression, the overall expression of isoform 1 and isoform 2 is very similar. Isoform 1 is abundantly expressed in skeletal muscle, heart and brain. Isoform 2 is highly expressed in brain and skeletal muscle and present at a very low level in heart, placenta, lung, liver, kidney and pancreas. In brain, isoform 2 is most abundant in the cerebellum, followed by the cerebral cortex and occipital lobe, while isoform 1 levels are higher in the cortex compared to the cerebellum. Isoform 2 is expressed in many regions of the brain, including cerebellar Purkinje cells, cortex pyramidal neurons and many of the neuronal fibers throughout the brain (at protein level). Also detected in dorsal root ganglion, in fibers of the spinal nerve and in cortical neurons and their processes (at protein level).

It localises to the cell membrane. The protein localises to the perikaryon. It is found in the cell projection. The protein resides in the axon. Its subcellular location is the secreted. In terms of biological role, regulatory subunit of multiple voltage-gated sodium (Nav) channels directly mediating the depolarization of excitable membranes. Navs, also called VGSCs (voltage-gated sodium channels) or VDSCs (voltage-dependent sodium channels), operate by switching between closed and open conformations depending on the voltage difference across the membrane. In the open conformation they allow Na(+) ions to selectively pass through the pore, along their electrochemical gradient. The influx of Na+ ions provokes membrane depolarization, initiating the propagation of electrical signals throughout cells and tissues. The accessory beta subunits participate in localization and functional modulation of the Nav channels. Modulates the activity of SCN1A/Nav1.1, SCN2A/Nav1.2, SCN3A/Nav1.3, SCN4A/Nav1.4, SCN5A/Nav1.5, SCN8A/Nav1.6, SCN9A/Nav1.7 and SCN10A/Nav1.8. Cell adhesion molecule that plays a critical role in neuronal migration and pathfinding during brain development. Stimulates neurite outgrowth. Has no regulatory function on the SCN2A sodium channel complex. This chain is Sodium channel regulatory subunit beta-1, found in Homo sapiens (Human).